The chain runs to 166 residues: MLELDLQIASETSAPDEARFRLWCEMGLRQRSADSELTIRLVDENEGRELNHTWRHKNYATNVLSFPADAPDDMLDIPLLGDLVICVPVVNREAAEQGKSVDAHWAHMVIHGCLHLLGYDHIDDEEAEEMEALERTLLEELGYPDPYAEDESADHPHSDTPSKDHE.

The Zn(2+) site is built by His111, His115, and His121. Residues Leu141–Glu166 are disordered. Positions Ala153–Glu166 are enriched in basic and acidic residues.

This sequence belongs to the endoribonuclease YbeY family. It depends on Zn(2+) as a cofactor.

It localises to the cytoplasm. In terms of biological role, single strand-specific metallo-endoribonuclease involved in late-stage 70S ribosome quality control and in maturation of the 3' terminus of the 16S rRNA. This is Endoribonuclease YbeY from Pseudomonas savastanoi pv. phaseolicola (strain 1448A / Race 6) (Pseudomonas syringae pv. phaseolicola (strain 1448A / Race 6)).